The primary structure comprises 180 residues: Flavodoxin B (180 aa).

The Flavodoxin-like domain occupies 4–173 (IGLFFGSNTG…RVAAWLAQIA (170 aa)).

It belongs to the flavodoxin family. The cofactor is FMN.

Its function is as follows. Low-potential electron donor to a number of redox enzymes. NifF is the electron donor to nitrogenase. This is Flavodoxin B (nifF) from Azotobacter chroococcum mcd 1.